A 105-amino-acid polypeptide reads, in one-letter code: Vacuolar ATPase assembly integral membrane protein VMA21 homolog (105 aa).

The tract at residues 1–26 is disordered; the sequence is MSTKNKKAAGGNGGAPKQTRQQSHDS. Residues 1–36 are Cytoplasmic-facing; sequence MSTKNKKAAGGNGGAPKQTRQQSHDSQDYSSFKTVL. The chain crosses the membrane as a helical span at residues 37–57; that stretch reads FYCMLIVFLPVLTFFVLKGFV. Residues 58–68 lie on the Lumenal side of the membrane; it reads LDQFLDISEVK. A helical transmembrane segment spans residues 69–89; that stretch reads VNIASAVGAVVALHIALGLYI. Residues 90-105 are Cytoplasmic-facing; it reads YRAYFGAPGSKGSKTD.

It belongs to the VMA21 family.

Its subcellular location is the endoplasmic reticulum membrane. The protein localises to the endoplasmic reticulum-Golgi intermediate compartment membrane. It localises to the cytoplasmic vesicle. It is found in the COPII-coated vesicle membrane. Required for the assembly of the V0 complex of the vacuolar ATPase (V-ATPase) in the endoplasmic reticulum. The chain is Vacuolar ATPase assembly integral membrane protein VMA21 homolog from Drosophila simulans (Fruit fly).